Reading from the N-terminus, the 403-residue chain is Phosphoglycerate kinase (403 aa).

Substrate contacts are provided by residues 22-24 (DLN), arginine 37, 60-63 (HLGR), arginine 119, and arginine 156. ATP contacts are provided by residues lysine 206, glycine 302, glutamate 333, and 359-362 (GGDS).

The protein belongs to the phosphoglycerate kinase family. Monomer.

It localises to the cytoplasm. The catalysed reaction is (2R)-3-phosphoglycerate + ATP = (2R)-3-phospho-glyceroyl phosphate + ADP. Its pathway is carbohydrate degradation; glycolysis; pyruvate from D-glyceraldehyde 3-phosphate: step 2/5. The polypeptide is Phosphoglycerate kinase (pgk) (Streptomyces coelicolor (strain ATCC BAA-471 / A3(2) / M145)).